A 289-amino-acid polypeptide reads, in one-letter code: UPF0276 protein BP2925 (289 aa).

This sequence belongs to the UPF0276 family.

This chain is UPF0276 protein BP2925, found in Bordetella pertussis (strain Tohama I / ATCC BAA-589 / NCTC 13251).